Consider the following 1001-residue polypeptide: O-GlcNAcase NagJ (1001 aa).

A signal peptide spans 1 to 30 (MKRKMLKRLLTSAFACMFIANGLITTTVRA). Residues 179 to 469 (VSARGIVEGF…WNRAIDMLYG (291 aa)) form a catalytic domain region. The region spanning 180–452 (SARGIVEGFY…TAADYSWNMD (273 aa)) is the GH84 domain. A protein is bound by residues G187, K218, and D297. D298 (proton donor) is an active-site residue. A protein contacts are provided by residues Y335, 394–396 (WWN), D401, and N429. Coiled-coil stretches lie at residues 515–543 (KEDASALIEELYGEFARMEEACNNLKANL) and 573–597 (VAQLNEDTEAYESAKEIAQNKLNTA). One can recognise a Fibronectin type-III domain in the interval 916-1001 (PVRDFKASEI…KESLTLRTAR (86 aa)).

It belongs to the glycosyl hydrolase 84 family.

The enzyme catalyses 3-O-(N-acetyl-beta-D-glucosaminyl)-L-seryl-[protein] + H2O = N-acetyl-D-glucosamine + L-seryl-[protein]. The catalysed reaction is 3-O-(N-acetyl-beta-D-glucosaminyl)-L-threonyl-[protein] + H2O = L-threonyl-[protein] + N-acetyl-D-glucosamine. With respect to regulation, inhibited by O-(2-acetamido-2-deoxy-D-glucopyranosylidene)amino-N-phenyl-carbamate (PUGNAc) and streptozotocin. Binds carbohydrates. Capable of hydrolyzing the glycosidic link of O-GlcNAcylated proteins. Can bind and deglycosylate O-glycosylated peptides from mammals. In Clostridium perfringens (strain ATCC 13124 / DSM 756 / JCM 1290 / NCIMB 6125 / NCTC 8237 / Type A), this protein is O-GlcNAcase NagJ (nagJ).